We begin with the raw amino-acid sequence, 147 residues long: UPF0306 protein YhbP (147 aa).

It belongs to the UPF0306 family.

The sequence is that of UPF0306 protein YhbP from Escherichia coli O7:K1 (strain IAI39 / ExPEC).